We begin with the raw amino-acid sequence, 314 residues long: NF-kappa-B inhibitor alpha (314 aa).

The segment at 1-39 (MFQPAGHGQDWAMEGPRDGLKKERLVDDRHDSGLDSMKD) is disordered. Basic and acidic residues predominate over residues 15-39 (GPRDGLKKERLVDDRHDSGLDSMKD). A Glycyl lysine isopeptide (Lys-Gly) (interchain with G-Cter in SUMO); alternate cross-link involves residue lysine 21. Lysine 21 participates in a covalent cross-link: Glycyl lysine isopeptide (Lys-Gly) (interchain with G-Cter in ubiquitin); alternate. Residue lysine 22 forms a Glycyl lysine isopeptide (Lys-Gly) (interchain with G-Cter in ubiquitin) linkage. The Destruction motif signature appears at 30 to 36 (HDSGLDS). Serine 32 is modified (phosphoserine; by IKKA and IKKB). Residue serine 36 is modified to Phosphoserine; by IKKA, IKKB, IKKE and TBK1. Tyrosine 42 is subject to Phosphotyrosine; by Tyr-kinases. Residues 45–54 (MVKELREIRL) carry the Nuclear export signal motif. Residues 110-120 (LQQTPLHLAVI) carry the Nuclear import signal motif. ANK repeat units lie at residues 110–139 (LQQTPLHLAVITNQPGIAEALLKAGCDPEL), 143–172 (RGNTPLHLACEQGCLASVAVLTQTCTPQHL), 182–211 (NGHTCLHLASIHGYLGIVEHLVTLGADVNA), and 216–245 (NGRTALHLAVDLQNPDLVSLLLKCGADVNR). A (3S)-3-hydroxyasparagine; by HIF1AN mark is found at asparagine 210 and asparagine 244. Phosphoserine; by CK2 occurs at positions 283 and 288. At threonine 291 the chain carries Phosphothreonine; by CK2. Position 293 is a phosphoserine; by CK2 (serine 293). A Phosphothreonine modification is found at threonine 296.

It belongs to the NF-kappa-B inhibitor family. In terms of assembly, interacts with RELA; the interaction requires the nuclear import signal. Part of a 70-90 kDa complex at least consisting of CHUK, IKBKB, NFKBIA, RELA, ELP1 and MAP3K14. Interacts with NKIRAS1 and NKIRAS2. Interacts with RWDD3; the interaction enhances sumoylation. Interacts with PRMT2. Interacts with PRKACA in platelets; this interaction is disrupted by thrombin and collagen. Interacts with MEFV. Interacts with DDRGK1; positively regulates NFKBIA phosphorylation and degradation. Interacts with HNRNPA2B1; the interaction may be mediated by the RRM2 domain of HNRNPA2B1, and HNRNPA2B1 may interact simultaneously with FAM76B and either NFKBIA or NFKBIE to form a complex. Post-translationally, phosphorylated at Ser-32 and Ser-36 by IKKA/CHUK and IKKB/IKBKB; disables inhibition of NF-kappa-B DNA-binding activity. Phosphorylation at positions 32 and 36 is prerequisite to recognition by the SCF(FBXW11) and SCF(BTRC) complexes, leading to polyubiquitination and subsequent degradation. In terms of processing, polyubiquitinated at Lys-21 and/or Lys-22 following phosphorylation at Ser-32 and Ser-36. Monoubiquitinated at Lys-21 and/or Lys-22 by UBE2D3. Ubiquitin chain elongation is then performed by CDC34 in cooperation with the SCF(FBXW11) E3 ligase complex, building ubiquitin chains from the UBE2D3-primed NFKBIA-linked ubiquitin. The resulting polyubiquitination leads to protein degradation. Also ubiquitinated by the SCF(BTRC) complex following stimulus-dependent phosphorylation at Ser-32 and Ser-36. Deubiquitinated by USP38, leading to NF-kappa-B inhibition. Sumoylated; sumoylation requires the presence of the nuclear import signal. Sumoylation blocks ubiquitination and proteasome-mediated degradation of the protein thereby increasing the protein stability. Post-translationally, hydroxylated by HIF1AN.

The protein localises to the cytoplasm. It localises to the nucleus. In terms of biological role, inhibits the activity of dimeric NF-kappa-B/REL complexes by trapping REL (RELA/p65 and NFKB1/p50) dimers in the cytoplasm by masking their nuclear localization signals. On cellular stimulation by immune and pro-inflammatory responses, becomes phosphorylated promoting ubiquitination and degradation, enabling the dimeric RELA to translocate to the nucleus and activate transcription. This is NF-kappa-B inhibitor alpha (Nfkbia) from Rattus norvegicus (Rat).